The primary structure comprises 194 residues: Large ribosomal subunit protein eL15 (194 aa).

The segment at 165–194 (AGKKGRGLRNKGKGAEKVRPSIRANEGKGK) is disordered. Basic residues predominate over residues 167–176 (KKGRGLRNKG). Residues 177–194 (KGAEKVRPSIRANEGKGK) are compositionally biased toward basic and acidic residues.

Belongs to the eukaryotic ribosomal protein eL15 family. As to quaternary structure, part of the 50S ribosomal subunit.

The protein is Large ribosomal subunit protein eL15 of Pyrococcus furiosus (strain ATCC 43587 / DSM 3638 / JCM 8422 / Vc1).